Here is a 151-residue protein sequence, read N- to C-terminus: 4-hydroxybenzoyl-CoA thioesterase (151 aa).

Residue E73 is part of the active site. A substrate-binding site is contributed by 100–102 (FFR).

The protein belongs to the thioesterase PaaI family. Homotetramer.

It catalyses the reaction 4-hydroxybenzoyl-CoA + H2O = 4-hydroxybenzoate + CoA + H(+). It functions in the pathway xenobiotic degradation; 4-chlorobenzoate degradation; 4-hydroxybenzoate from 4-chlorobenzoate: step 3/3. In Arthrobacter globiformis, this protein is 4-hydroxybenzoyl-CoA thioesterase.